The primary structure comprises 313 residues: tRNA dimethylallyltransferase (313 aa).

11-18 (GPTACGKT) lines the ATP pocket. Substrate is bound at residue 13-18 (TACGKT). 3 interaction with substrate tRNA regions span residues 36–39 (DSAL), 160–164 (QRIGR), and 243–248 (RCVGYR).

Belongs to the IPP transferase family. As to quaternary structure, monomer. It depends on Mg(2+) as a cofactor.

It catalyses the reaction adenosine(37) in tRNA + dimethylallyl diphosphate = N(6)-dimethylallyladenosine(37) in tRNA + diphosphate. Its function is as follows. Catalyzes the transfer of a dimethylallyl group onto the adenine at position 37 in tRNAs that read codons beginning with uridine, leading to the formation of N6-(dimethylallyl)adenosine (i(6)A). The sequence is that of tRNA dimethylallyltransferase from Neisseria gonorrhoeae (strain NCCP11945).